The primary structure comprises 106 residues: Nucleoid-associated protein XOO1065 (106 aa).

Over residues 80-89 (KIDAESKDRM) the composition is skewed to basic and acidic residues. A disordered region spans residues 80 to 106 (KIDAESKDRMGSATAGMQLPPGMKLPF).

The protein belongs to the YbaB/EbfC family. In terms of assembly, homodimer.

It is found in the cytoplasm. The protein resides in the nucleoid. Binds to DNA and alters its conformation. May be involved in regulation of gene expression, nucleoid organization and DNA protection. The sequence is that of Nucleoid-associated protein XOO1065 from Xanthomonas oryzae pv. oryzae (strain KACC10331 / KXO85).